The sequence spans 548 residues: Chaperonin GroEL (548 aa).

ATP-binding positions include 29-32 (TLGP), Lys50, 86-90 (DGTTT), Gly414, 478-480 (NAA), and Asp494.

The protein belongs to the chaperonin (HSP60) family. As to quaternary structure, forms a cylinder of 14 subunits composed of two heptameric rings stacked back-to-back. Interacts with the co-chaperonin GroES.

It localises to the cytoplasm. It carries out the reaction ATP + H2O + a folded polypeptide = ADP + phosphate + an unfolded polypeptide.. Functionally, together with its co-chaperonin GroES, plays an essential role in assisting protein folding. The GroEL-GroES system forms a nano-cage that allows encapsulation of the non-native substrate proteins and provides a physical environment optimized to promote and accelerate protein folding. This is Chaperonin GroEL from Alcanivorax borkumensis (strain ATCC 700651 / DSM 11573 / NCIMB 13689 / SK2).